A 1009-amino-acid chain; its full sequence is Probable beta-galactosidase B (1009 aa).

The N-terminal stretch at 1–21 (MAQLFTKIIVYFLLFASPLLA) is a signal peptide. N28 carries an N-linked (GlcNAc...) asparagine glycan. Residue Y85 participates in substrate binding. A glycan (N-linked (GlcNAc...) asparagine) is linked at N95. Substrate-binding residues include N130, A131, E132, and N190. The Proton donor role is filled by E191. N-linked (GlcNAc...) asparagine glycosylation is present at N247. Substrate is bound at residue Y260. A disulfide bond links C266 and C319. E303 serves as the catalytic Nucleophile. Position 368 (Y368) interacts with substrate. N-linked (GlcNAc...) asparagine glycans are attached at residues N375, N406, N427, N451, N682, N740, N771, N784, N826, and N883.

It belongs to the glycosyl hydrolase 35 family.

Its subcellular location is the secreted. It catalyses the reaction Hydrolysis of terminal non-reducing beta-D-galactose residues in beta-D-galactosides.. Its function is as follows. Cleaves beta-linked terminal galactosyl residues from gangliosides, glycoproteins, and glycosaminoglycans. In Talaromyces marneffei (strain ATCC 18224 / CBS 334.59 / QM 7333) (Penicillium marneffei), this protein is Probable beta-galactosidase B (lacB).